A 516-amino-acid chain; its full sequence is Tyrosine decarboxylase 3 (516 aa).

Lys319 carries the N6-(pyridoxal phosphate)lysine modification.

Belongs to the group II decarboxylase family. In terms of assembly, homodimer. Pyridoxal 5'-phosphate serves as cofactor.

The enzyme catalyses L-tyrosine + H(+) = tyramine + CO2. In Petroselinum crispum (Parsley), this protein is Tyrosine decarboxylase 3 (TYRDC-3).